Consider the following 116-residue polypeptide: Fluoride-specific ion channel FluC 2 (116 aa).

A run of 2 helical transmembrane segments spans residues 3-23 (LLTA…RYAV) and 43-63 (LLFG…AVTV). Na(+)-binding residues include Gly-67 and Thr-70. The chain crosses the membrane as a helical span at residues 96–116 (VGTLAAALLAVFLGIALGAAL).

It belongs to the fluoride channel Fluc/FEX (TC 1.A.43) family.

It is found in the cell membrane. The enzyme catalyses fluoride(in) = fluoride(out). Its activity is regulated as follows. Na(+) is not transported, but it plays an essential structural role and its presence is essential for fluoride channel function. In terms of biological role, fluoride-specific ion channel. Important for reducing fluoride concentration in the cell, thus reducing its toxicity. This chain is Fluoride-specific ion channel FluC 2, found in Natronomonas pharaonis (strain ATCC 35678 / DSM 2160 / CIP 103997 / JCM 8858 / NBRC 14720 / NCIMB 2260 / Gabara) (Halobacterium pharaonis).